Consider the following 428-residue polypeptide: 3-phosphoshikimate 1-carboxyvinyltransferase (428 aa).

3-phosphoshikimate-binding residues include lysine 23, serine 24, and arginine 28. Residue lysine 23 participates in phosphoenolpyruvate binding. Residues glycine 97 and arginine 125 each contribute to the phosphoenolpyruvate site. The 3-phosphoshikimate site is built by serine 170, serine 171, glutamine 172, serine 198, aspartate 314, asparagine 337, and lysine 341. Glutamine 172 provides a ligand contact to phosphoenolpyruvate. The active-site Proton acceptor is the aspartate 314. Phosphoenolpyruvate-binding residues include arginine 345, arginine 387, and lysine 412.

This sequence belongs to the EPSP synthase family. Monomer.

It is found in the cytoplasm. The catalysed reaction is 3-phosphoshikimate + phosphoenolpyruvate = 5-O-(1-carboxyvinyl)-3-phosphoshikimate + phosphate. The protein operates within metabolic intermediate biosynthesis; chorismate biosynthesis; chorismate from D-erythrose 4-phosphate and phosphoenolpyruvate: step 6/7. Its function is as follows. Catalyzes the transfer of the enolpyruvyl moiety of phosphoenolpyruvate (PEP) to the 5-hydroxyl of shikimate-3-phosphate (S3P) to produce enolpyruvyl shikimate-3-phosphate and inorganic phosphate. This chain is 3-phosphoshikimate 1-carboxyvinyltransferase, found in Cronobacter sakazakii (strain ATCC BAA-894) (Enterobacter sakazakii).